Consider the following 229-residue polypeptide: MSLLEQLDKNIAASGGLIVSCQPVPGSPLDKPEIVAAMALAAEQAGAVAVRIEGIDNLRMTRSLVSVPIIGIIKRDLDDSPVRITPFLDDVDALAQAGAAIIAVDGTARQRPVAVEALLARIHHHHLLAMADCSSVDDGLACQRLGADIIGTTMSGYTTPDTPEEPDLPLVKALHDAGCRVIAEGRYNSPALAAEAIRYGAWAVTVGSAITRLEHICGWYNDALKKAAS.

It belongs to the NanE family.

It carries out the reaction an N-acyl-D-glucosamine 6-phosphate = an N-acyl-D-mannosamine 6-phosphate. It participates in amino-sugar metabolism; N-acetylneuraminate degradation; D-fructose 6-phosphate from N-acetylneuraminate: step 3/5. Its function is as follows. Converts N-acetylmannosamine-6-phosphate (ManNAc-6-P) to N-acetylglucosamine-6-phosphate (GlcNAc-6-P). The polypeptide is Putative N-acetylmannosamine-6-phosphate 2-epimerase (Salmonella agona (strain SL483)).